We begin with the raw amino-acid sequence, 138 residues long: Glutaredoxin-C7 (138 aa).

The tract at residues 17–40 (SSTRGGGGGGMLGLTLFDPPGGEQ) is disordered. The 96-residue stretch at 42–137 (AERIGRLVRE…PRLREVGALC (96 aa)) folds into the Glutaredoxin domain. A disulfide bridge connects residues Cys-62 and Cys-65.

This sequence belongs to the glutaredoxin family. CC-type subfamily.

Its subcellular location is the cytoplasm. In terms of biological role, has a glutathione-disulfide oxidoreductase activity in the presence of NADPH and glutathione reductase. Reduces low molecular weight disulfides and proteins. This is Glutaredoxin-C7 (GRXC7) from Oryza sativa subsp. japonica (Rice).